The primary structure comprises 549 residues: Rhodopsin kinase grk7a (549 aa).

At Ser33 the chain carries Phosphoserine. The RGS domain maps to 53–171 (FESLCEKQPI…QASPFFDKFL (119 aa)). The 264-residue stretch at 186–449 (FYEFRTLGKG…NDDPRKHEWF (264 aa)) folds into the Protein kinase domain. ATP contacts are provided by residues 192-200 (LGKGGFGEV) and Lys215. The active-site Proton acceptor is the Asp311. Positions 450–515 (KSINFARLEA…GAVSIAWQQE (66 aa)) constitute an AGC-kinase C-terminal domain. The tract at residues 522–549 (FDELSDPNRKESSGGSDDDKKSGTCTLL) is disordered. Residues 527 to 543 (DPNRKESSGGSDDDKKS) show a composition bias toward basic and acidic residues. Cys546 is modified (cysteine methyl ester). Cys546 carries the S-geranylgeranyl cysteine lipid modification. Positions 547-549 (TLL) are cleaved as a propeptide — removed in mature form.

The protein belongs to the protein kinase superfamily. AGC Ser/Thr protein kinase family. GPRK subfamily. In terms of processing, phosphorylation at Ser-33 is regulated by light and activated by cAMP.

The protein localises to the membrane. The enzyme catalyses L-threonyl-[rhodopsin] + ATP = O-phospho-L-threonyl-[rhodopsin] + ADP + H(+). It catalyses the reaction L-seryl-[rhodopsin] + ATP = O-phospho-L-seryl-[rhodopsin] + ADP + H(+). Retina-specific kinase involved in the shutoff of the photoresponse and adaptation to changing light conditions via cone opsin phosphorylation, including rhodopsin (RHO). The chain is Rhodopsin kinase grk7a (grk7a) from Danio rerio (Zebrafish).